We begin with the raw amino-acid sequence, 46 residues long: Light-harvesting protein B-800/850 beta 1 chain (46 aa).

The Cytoplasmic portion of the chain corresponds to 2–19 (AERSLSGLTEEEAIAVHD). His-18 and His-36 together coordinate a bacteriochlorophyll. A helical membrane pass occupies residues 20 to 42 (QFKTTFSAFIILAAVAHVLVWVW). Residues 43 to 46 (KPWF) are Periplasmic-facing.

It belongs to the antenna complex beta subunit family. The core complex is formed by different alpha and beta chains, binding bacteriochlorophyll molecules, and arranged most probably in tetrameric structures disposed around the reaction center.

Its subcellular location is the cell inner membrane. Functionally, antenna complexes are light-harvesting systems, which transfer the excitation energy to the reaction centers. In Magnetospirillum molischianum (Rhodospirillum molischianum), this protein is Light-harvesting protein B-800/850 beta 1 chain (B1).